Reading from the N-terminus, the 179-residue chain is Large ribosomal subunit protein uL6 (179 aa).

Belongs to the universal ribosomal protein uL6 family. Part of the 50S ribosomal subunit.

Its function is as follows. This protein binds to the 23S rRNA, and is important in its secondary structure. It is located near the subunit interface in the base of the L7/L12 stalk, and near the tRNA binding site of the peptidyltransferase center. The chain is Large ribosomal subunit protein uL6 from Clostridium perfringens (strain ATCC 13124 / DSM 756 / JCM 1290 / NCIMB 6125 / NCTC 8237 / Type A).